Here is a 181-residue protein sequence, read N- to C-terminus: Protein GrpE (181 aa).

Residues 1–24 show a composition bias toward acidic residues; it reads MSEENIGENEVETPETEPSAEAEV. Residues 1–26 form a disordered region; it reads MSEENIGENEVETPETEPSAEAEVES.

Belongs to the GrpE family. Homodimer.

The protein localises to the cytoplasm. Its function is as follows. Participates actively in the response to hyperosmotic and heat shock by preventing the aggregation of stress-denatured proteins, in association with DnaK and GrpE. It is the nucleotide exchange factor for DnaK and may function as a thermosensor. Unfolded proteins bind initially to DnaJ; upon interaction with the DnaJ-bound protein, DnaK hydrolyzes its bound ATP, resulting in the formation of a stable complex. GrpE releases ADP from DnaK; ATP binding to DnaK triggers the release of the substrate protein, thus completing the reaction cycle. Several rounds of ATP-dependent interactions between DnaJ, DnaK and GrpE are required for fully efficient folding. This Rhizorhabdus wittichii (strain DSM 6014 / CCUG 31198 / JCM 15750 / NBRC 105917 / EY 4224 / RW1) (Sphingomonas wittichii) protein is Protein GrpE.